Consider the following 168-residue polypeptide: Probable chorismate pyruvate-lyase (168 aa).

Residues arginine 75, isoleucine 114, and glutamate 155 each coordinate substrate.

Belongs to the UbiC family.

Its subcellular location is the cytoplasm. It carries out the reaction chorismate = 4-hydroxybenzoate + pyruvate. The protein operates within cofactor biosynthesis; ubiquinone biosynthesis. Its function is as follows. Removes the pyruvyl group from chorismate, with concomitant aromatization of the ring, to provide 4-hydroxybenzoate (4HB) for the ubiquinone pathway. In Psychrobacter cryohalolentis (strain ATCC BAA-1226 / DSM 17306 / VKM B-2378 / K5), this protein is Probable chorismate pyruvate-lyase.